The sequence spans 156 residues: Small ribosomal subunit protein uS7 (156 aa).

It belongs to the universal ribosomal protein uS7 family. Part of the 30S ribosomal subunit. Contacts proteins S9 and S11.

In terms of biological role, one of the primary rRNA binding proteins, it binds directly to 16S rRNA where it nucleates assembly of the head domain of the 30S subunit. Is located at the subunit interface close to the decoding center, probably blocks exit of the E-site tRNA. This Crocosphaera subtropica (strain ATCC 51142 / BH68) (Cyanothece sp. (strain ATCC 51142)) protein is Small ribosomal subunit protein uS7.